The sequence spans 383 residues: NAD(P) transhydrogenase subunit alpha part 1 (383 aa).

Residues Q131–D134, V181, D201–R203, and G231 contribute to the NAD(+) site.

It belongs to the AlaDH/PNT family. In terms of assembly, heterotrimer of two alpha chains and a beta (PntB) chain; in Rickettsia, the alpha chain is made of two subunits (PntAA and PntAB) and forms a dimer.

It carries out the reaction NAD(+) + NADPH + H(+)(in) = NADH + NADP(+) + H(+)(out). Its function is as follows. The transhydrogenation between NADH and NADP is coupled to respiration and ATP hydrolysis and functions as a proton pump across the membrane. This is NAD(P) transhydrogenase subunit alpha part 1 (pntAA) from Rickettsia prowazekii (strain Madrid E).